Consider the following 954-residue polypeptide: uncharacterized protein (954 aa).

A signal peptide spans 1–35 (MKILFNNTFELFCLFVFVTWALFLNNNGILYPVHC). Positions 381 to 415 (KNKISSARDDIQKDINKMESELINVSNEINRLDIV) form a coiled coil. Residues 733–765 (NIRNDNNNNNNNNNNNSNNNNNNNNNNKDNSVA) form a disordered region. The span at 736-763 (NDNNNNNNNNNNNSNNNNNNNNNNKDNS) shows a compositional bias: low complexity.

This is an uncharacterized protein from Plasmodium falciparum (isolate 3D7).